A 64-amino-acid chain; its full sequence is uncharacterized protein (64 aa).

It belongs to the orthopoxviruses VACWR006 protein family.

This is an uncharacterized protein from Vaccinia virus (strain Western Reserve) (VACV).